A 318-amino-acid chain; its full sequence is 2-methyl-6-phytyl-1,4-hydroquinone methyltransferase (318 aa).

Residues 1 to 39 form the signal peptide; the sequence is MPEYLLLPAGLISLSLAIAAGLYLLTARGYQSSDSVANA. Positions 97 to 106 are SAM motif I; that stretch reads VLDVGCGIGG. Positions 157–165 are SAM motif II; sequence GSFDVVWSV. The interval 184-193 is SAM motif III; it reads VVKPGGILVV.

It belongs to the class I-like SAM-binding methyltransferase superfamily. gTMT family.

It carries out the reaction 2-methyl-6-phytyl-1,4-benzene-1,4-diol + S-adenosyl-L-methionine = 2,3-dimethyl-6-phytylbenzene-1,4-diol + S-adenosyl-L-homocysteine + H(+). The enzyme catalyses 2-methyl-6-(all-trans-nonaprenyl)benzene-1,4-diol + S-adenosyl-L-methionine = plastoquinol-9 + S-adenosyl-L-homocysteine + H(+). It catalyses the reaction 6-geranylgeranyl-2-methylbenzene-1,4-diol + S-adenosyl-L-methionine = 6-geranylgeranyl-2,3-dimethylbenzene-1,4-diol + S-adenosyl-L-homocysteine + H(+). The protein operates within cofactor biosynthesis; tocopherol biosynthesis. Its function is as follows. Involved in a key methylation step in both tocopherol (vitamin E) and plastoquinone synthesis. Catalyzes the conversion of 2-methyl-6-phytyl-1,4-hydroquinol (MPBQ) to 2,3-dimethyl-6-phytyl-1,4-hydroquinol (DMPQ, a substrate for tocopherol cyclase), and 2-methyl-6-solanyl-1,4-benzoquinol (MSBQ) to plastoquinol. The protein is 2-methyl-6-phytyl-1,4-hydroquinone methyltransferase of Synechocystis sp. (strain ATCC 27184 / PCC 6803 / Kazusa).